We begin with the raw amino-acid sequence, 470 residues long: GDP-Man:Man(3)GlcNAc(2)-PP-Dol alpha-1,2-mannosyltransferase (470 aa).

Residues 1 to 15 (MSDTVISLISHSITT) lie on the Lumenal side of the membrane. A helical membrane pass occupies residues 16–36 (VFYLVPLIIALIIPFSLYSGF). Residues 37 to 131 (RRKSKTVAFF…HYKHCTMLFQ (95 aa)) are Cytoplasmic-facing. The helical intramembrane region spans 132–152 (ALAGLILALEAWFRMVPAVFI). Topologically, residues 153 to 378 (DSMGYPLSLP…ISIHTMHNEH (226 aa)) are cytoplasmic. The helical intramembrane region spans 379–399 (FGISVVEAMAASTIILSNDSG). At 400–470 (GPRMDIVKDY…HWNKEIEKVL (71 aa)) the chain is on the cytoplasmic side.

Belongs to the glycosyltransferase group 1 family. Glycosyltransferase 4 subfamily.

The protein localises to the endoplasmic reticulum membrane. The catalysed reaction is an alpha-D-Man-(1-&gt;3)-[alpha-D-Man-(1-&gt;6)]-beta-D-Man-(1-&gt;4)-beta-D-GlcNAc-(1-&gt;4)-alpha-D-GlcNAc-diphospho-di-trans,poly-cis-dolichol + 2 GDP-alpha-D-mannose = an alpha-D-Man-(1-&gt;2)-alpha-D-Man-(1-&gt;2)-alpha-D-Man-(1-&gt;3)-[alpha-D-Man-(1-&gt;6)]-beta-D-Man-(1-&gt;4)-beta-D-GlcNAc-(1-&gt;4)-alpha-D-GlcNAc-diphospho-di-trans,poly-cis-dolichol + 2 GDP + 2 H(+). Its pathway is protein modification; protein glycosylation. Functionally, GDP-Man:Man(3)GlcNAc(2)-PP-Dol alpha-1,2-mannosyltransferase that operates in the biosynthetic pathway of dolichol-linked oligosaccharides, the glycan precursors employed in protein asparagine (N)-glycosylation. The assembly of dolichol-linked oligosaccharides begins on the cytosolic side of the endoplasmic reticulum membrane and finishes in its lumen. The sequential addition of sugars to dolichol pyrophosphate produces dolichol-linked oligosaccharides containing fourteen sugars, including two GlcNAcs, nine mannoses and three glucoses. Once assembled, the oligosaccharide is transferred from the lipid to nascent proteins by oligosaccharyltransferases. Catalyzes, on the cytoplasmic face of the endoplasmic reticulum, the addition of the fourth and fifth mannose residues to the dolichol-linked oligosaccharide chain, to produce Man(5)GlcNAc(2)-PP-dolichol core oligosaccharide. Man(5)GlcNAc(2)-PP-dolichol is a substrate for ALG3, the following enzyme in the biosynthetic pathway. This Caenorhabditis elegans protein is GDP-Man:Man(3)GlcNAc(2)-PP-Dol alpha-1,2-mannosyltransferase.